A 258-amino-acid polypeptide reads, in one-letter code: Type III pantothenate kinase (258 aa).

6–13 serves as a coordination point for ATP; the sequence is DVGNSDTV. 108-111 is a binding site for substrate; sequence GSDR. Catalysis depends on aspartate 110, which acts as the Proton acceptor. Aspartate 130 lines the K(+) pocket. Threonine 133 is an ATP binding site. Threonine 185 serves as a coordination point for substrate.

The protein belongs to the type III pantothenate kinase family. As to quaternary structure, homodimer. NH4(+) serves as cofactor. Requires K(+) as cofactor.

Its subcellular location is the cytoplasm. It catalyses the reaction (R)-pantothenate + ATP = (R)-4'-phosphopantothenate + ADP + H(+). The protein operates within cofactor biosynthesis; coenzyme A biosynthesis; CoA from (R)-pantothenate: step 1/5. In terms of biological role, catalyzes the phosphorylation of pantothenate (Pan), the first step in CoA biosynthesis. In Thermobifida fusca (strain YX), this protein is Type III pantothenate kinase.